The sequence spans 371 residues: N-acetyldiaminopimelate deacetylase (371 aa).

The active site involves Asp68. The active-site Proton acceptor is Glu127.

Belongs to the peptidase M20A family. N-acetyldiaminopimelate deacetylase subfamily.

The enzyme catalyses N-acetyl-(2S,6S)-2,6-diaminopimelate + H2O = (2S,6S)-2,6-diaminopimelate + acetate. It participates in amino-acid biosynthesis; L-lysine biosynthesis via DAP pathway; LL-2,6-diaminopimelate from (S)-tetrahydrodipicolinate (acetylase route): step 3/3. Functionally, catalyzes the conversion of N-acetyl-diaminopimelate to diaminopimelate and acetate. This Listeria monocytogenes serovar 1/2a (strain ATCC BAA-679 / EGD-e) protein is N-acetyldiaminopimelate deacetylase.